The chain runs to 1072 residues: Carbamoyl phosphate synthase large chain (1072 aa).

Positions 1-401 are carboxyphosphate synthetic domain; the sequence is MPKRLDINTI…SLLKAVRSLE (401 aa). Residues Arg129, Arg169, Gly175, Gly176, Lys208, Ile210, Glu215, Gly241, Val242, His243, Gln284, and Glu298 each contribute to the ATP site. Residues 133–327 form the ATP-grasp 1 domain; that stretch reads RTLMQELNEP…IAKLAAKIAV (195 aa). The Mg(2+) site is built by Gln284, Glu298, and Asn300. Residues Gln284, Glu298, and Asn300 each contribute to the Mn(2+) site. The interval 402 to 546 is oligomerization domain; it reads LGIYHLELDH…YSTYADENES (145 aa). Residues 547–929 are carbamoyl phosphate synthetic domain; it reads IVTDRKSVVV…ALYKGLVASG (383 aa). Positions 671 to 861 constitute an ATP-grasp 2 domain; the sequence is EAALTKLGIP…MANVATKVIL (191 aa). Residues Arg707, Arg746, Glu752, Gly777, Val778, His779, Ser780, Gln820, and Glu832 each coordinate ATP. Mg(2+) is bound by residues Gln820, Glu832, and Asn834. Mn(2+)-binding residues include Gln820, Glu832, and Asn834. The MGS-like domain occupies 930 to 1072; that stretch reads INIPTHGSVI…QTKRHEVVHA (143 aa). Residues 930 to 1072 form an allosteric domain region; the sequence is INIPTHGSVI…QTKRHEVVHA (143 aa).

The protein belongs to the CarB family. Composed of two chains; the small (or glutamine) chain promotes the hydrolysis of glutamine to ammonia, which is used by the large (or ammonia) chain to synthesize carbamoyl phosphate. Tetramer of heterodimers (alpha,beta)4. Mg(2+) serves as cofactor. Mn(2+) is required as a cofactor.

It catalyses the reaction hydrogencarbonate + L-glutamine + 2 ATP + H2O = carbamoyl phosphate + L-glutamate + 2 ADP + phosphate + 2 H(+). It carries out the reaction hydrogencarbonate + NH4(+) + 2 ATP = carbamoyl phosphate + 2 ADP + phosphate + 2 H(+). The protein operates within amino-acid biosynthesis; L-arginine biosynthesis; carbamoyl phosphate from bicarbonate: step 1/1. It functions in the pathway pyrimidine metabolism; UMP biosynthesis via de novo pathway; (S)-dihydroorotate from bicarbonate: step 1/3. Its function is as follows. Large subunit of the glutamine-dependent carbamoyl phosphate synthetase (CPSase). CPSase catalyzes the formation of carbamoyl phosphate from the ammonia moiety of glutamine, carbonate, and phosphate donated by ATP, constituting the first step of 2 biosynthetic pathways, one leading to arginine and/or urea and the other to pyrimidine nucleotides. The large subunit (synthetase) binds the substrates ammonia (free or transferred from glutamine from the small subunit), hydrogencarbonate and ATP and carries out an ATP-coupled ligase reaction, activating hydrogencarbonate by forming carboxy phosphate which reacts with ammonia to form carbamoyl phosphate. The sequence is that of Carbamoyl phosphate synthase large chain from Bacillus thuringiensis subsp. konkukian (strain 97-27).